Reading from the N-terminus, the 383-residue chain is Histidine decarboxylase (383 aa).

H120 contributes to the substrate binding site. K233 carries the post-translational modification N6-(pyridoxal phosphate)lysine.

This sequence belongs to the group II decarboxylase family. Homotetramer. Pyridoxal 5'-phosphate is required as a cofactor.

It catalyses the reaction L-histidine + H(+) = histamine + CO2. The sequence is that of Histidine decarboxylase from Acinetobacter baumannii (strain ACICU).